Reading from the N-terminus, the 292-residue chain is Cholesterol ring-cleaving hydrolase IpdA subunit (292 aa).

Belongs to the 3-oxoacid CoA-transferase subunit A family. In terms of assembly, heterotetramer composed of 2 IpdA subunits and 2 IpdB subunits.

It catalyses the reaction (3E)-2-(2-carboxylatoethyl)-3-methyl-6-oxocyclohex-1-ene-1-carboxyl-CoA + H2O = 6-methyl-3,7-dioxodecanedioyl-CoA. It functions in the pathway steroid metabolism; cholesterol degradation. Involved in the final steps of cholesterol and steroid degradation. Opens the last steroid ring of cholesterol by catalyzing the hydrolysis of (3E)-2-(2-carboxylatoethyl)-3-methyl-6-oxocyclohex-1-ene-1-carboxyl-CoA (COCHEA-CoA) to 6-methyl-3,7-dioxodecanedioyl-CoA (MeDODA-CoA). This is Cholesterol ring-cleaving hydrolase IpdA subunit from Mycobacterium tuberculosis (strain CDC 1551 / Oshkosh).